Here is a 148-residue protein sequence, read N- to C-terminus: UPF0260 protein YcgN (148 aa).

This sequence belongs to the UPF0260 family.

The protein is UPF0260 protein YcgN of Salmonella paratyphi A (strain AKU_12601).